The following is a 434-amino-acid chain: Nicotinate phosphoribosyltransferase (434 aa).

His242 is modified (phosphohistidine; by autocatalysis).

This sequence belongs to the NAPRTase family. Transiently phosphorylated on a His residue during the reaction cycle. Phosphorylation strongly increases the affinity for substrates and increases the rate of nicotinate D-ribonucleotide production. Dephosphorylation regenerates the low-affinity form of the enzyme, leading to product release.

The enzyme catalyses nicotinate + 5-phospho-alpha-D-ribose 1-diphosphate + ATP + H2O = nicotinate beta-D-ribonucleotide + ADP + phosphate + diphosphate. It participates in cofactor biosynthesis; NAD(+) biosynthesis; nicotinate D-ribonucleotide from nicotinate: step 1/1. Its function is as follows. Catalyzes the synthesis of beta-nicotinate D-ribonucleotide from nicotinate and 5-phospho-D-ribose 1-phosphate at the expense of ATP. The sequence is that of Nicotinate phosphoribosyltransferase from Bradyrhizobium diazoefficiens (strain JCM 10833 / BCRC 13528 / IAM 13628 / NBRC 14792 / USDA 110).